Reading from the N-terminus, the 442-residue chain is ATP-dependent RNA helicase SUB2 (442 aa).

The Q motif signature appears at 59–87 (TGFRDFLLKPELLRAISDLGFEHPSEVQQ). Positions 90–265 (IPQAILGTDV…KKFMQSPLEI (176 aa)) constitute a Helicase ATP-binding domain. Residue 103-110 (AKSGMGKT) coordinates ATP. Residues 212–215 (DECD) carry the DECD box motif. Residues 277 to 438 (GLQQFYLKLE…TLPETVDPAT (162 aa)) form the Helicase C-terminal domain.

The protein belongs to the DEAD box helicase family. DECD subfamily.

The protein localises to the nucleus. The enzyme catalyses ATP + H2O = ADP + phosphate + H(+). Its function is as follows. ATP-binding RNA helicase involved in transcription elongation and required for the export of mRNA out of the nucleus. SUB2 also plays a role in pre-mRNA splicing and spliceosome assembly. May be involved in rDNA and telomeric silencing, and maintenance of genome integrity. The chain is ATP-dependent RNA helicase SUB2 (SUB2) from Cryptococcus neoformans var. neoformans serotype D (strain JEC21 / ATCC MYA-565) (Filobasidiella neoformans).